A 143-amino-acid polypeptide reads, in one-letter code: Transcriptional regulator MraZ (143 aa).

SpoVT-AbrB domains are found at residues 5-47 (EYQH…PKDE) and 76-119 (AIES…SKDN).

This sequence belongs to the MraZ family. As to quaternary structure, forms oligomers.

The protein resides in the cytoplasm. It is found in the nucleoid. In Oenococcus oeni (strain ATCC BAA-331 / PSU-1), this protein is Transcriptional regulator MraZ.